Consider the following 553-residue polypeptide: Arginine--tRNA ligase (553 aa).

Positions 132–140 match the 'HIGH' region motif; the sequence is PTGDLHIGH.

Belongs to the class-I aminoacyl-tRNA synthetase family. As to quaternary structure, monomer.

Its subcellular location is the cytoplasm. It catalyses the reaction tRNA(Arg) + L-arginine + ATP = L-arginyl-tRNA(Arg) + AMP + diphosphate. This chain is Arginine--tRNA ligase, found in Staphylococcus aureus (strain N315).